A 251-amino-acid chain; its full sequence is Xylose/arabinose import ATP-binding protein XylG (251 aa).

The ABC transporter domain maps to 5-241 (LEIRDVHKSF…EITEVMTSFA (237 aa)). 37 to 44 (GDNGAGKS) is a binding site for ATP.

Belongs to the ABC transporter superfamily. The complex is composed of two ATP-binding proteins (XylG), two transmembrane proteins (XylH) and a solute-binding protein (XylF).

The protein localises to the cell membrane. It catalyses the reaction D-xylose(out) + ATP + H2O = D-xylose(in) + ADP + phosphate + H(+). It carries out the reaction L-arabinose(out) + ATP + H2O = L-arabinose(in) + ADP + phosphate + H(+). In terms of biological role, part of the ABC transporter complex XylFGH involved in the uptake of xylose and arabinose. Responsible for energy coupling to the transport system. The polypeptide is Xylose/arabinose import ATP-binding protein XylG (Sulfolobus acidocaldarius (strain ATCC 33909 / DSM 639 / JCM 8929 / NBRC 15157 / NCIMB 11770)).